Reading from the N-terminus, the 128-residue chain is NADPH-dependent 7-cyano-7-deazaguanine reductase (128 aa).

Residue Cys-34 is the Thioimide intermediate of the active site. The active-site Proton donor is the Asp-41. Substrate contacts are provided by residues 56 to 58 and 75 to 76; these read VEL and HE.

The protein belongs to the GTP cyclohydrolase I family. QueF type 1 subfamily.

It localises to the cytoplasm. It catalyses the reaction 7-aminomethyl-7-carbaguanine + 2 NADP(+) = 7-cyano-7-deazaguanine + 2 NADPH + 3 H(+). It participates in tRNA modification; tRNA-queuosine biosynthesis. In terms of biological role, catalyzes the NADPH-dependent reduction of 7-cyano-7-deazaguanine (preQ0) to 7-aminomethyl-7-deazaguanine (preQ1). The polypeptide is NADPH-dependent 7-cyano-7-deazaguanine reductase (Thermomicrobium roseum (strain ATCC 27502 / DSM 5159 / P-2)).